The sequence spans 170 residues: Archaemetzincin (170 aa).

His-110 is a binding site for Zn(2+). Residue Glu-111 is the Proton acceptor of the active site. Zn(2+)-binding residues include His-114, His-120, Cys-121, Cys-125, Cys-144, and Cys-147.

Belongs to the peptidase M54 family. In terms of assembly, monomer. It depends on Zn(2+) as a cofactor.

In terms of biological role, probable zinc metalloprotease whose natural substrate is unknown. In Nanoarchaeum equitans (strain Kin4-M), this protein is Archaemetzincin.